A 264-amino-acid polypeptide reads, in one-letter code: Thymidylate synthase (264 aa).

DUMP is bound by residues arginine 21 and 126-127 (RR). The active-site Nucleophile is the cysteine 146. Residues 166–169 (RSAD), asparagine 177, and 207–209 (HLY) contribute to the dUMP site. Residue aspartate 169 participates in (6R)-5,10-methylene-5,6,7,8-tetrahydrofolate binding. Alanine 263 provides a ligand contact to (6R)-5,10-methylene-5,6,7,8-tetrahydrofolate.

The protein belongs to the thymidylate synthase family. Bacterial-type ThyA subfamily. As to quaternary structure, homodimer.

Its subcellular location is the cytoplasm. It catalyses the reaction dUMP + (6R)-5,10-methylene-5,6,7,8-tetrahydrofolate = 7,8-dihydrofolate + dTMP. It functions in the pathway pyrimidine metabolism; dTTP biosynthesis. Functionally, catalyzes the reductive methylation of 2'-deoxyuridine-5'-monophosphate (dUMP) to 2'-deoxythymidine-5'-monophosphate (dTMP) while utilizing 5,10-methylenetetrahydrofolate (mTHF) as the methyl donor and reductant in the reaction, yielding dihydrofolate (DHF) as a by-product. This enzymatic reaction provides an intracellular de novo source of dTMP, an essential precursor for DNA biosynthesis. The chain is Thymidylate synthase from Afipia carboxidovorans (strain ATCC 49405 / DSM 1227 / KCTC 32145 / OM5) (Oligotropha carboxidovorans).